The chain runs to 345 residues: Ninja-family protein AFP1 (345 aa).

Disordered regions lie at residues 114-185 (TSLP…ATAN) and 201-256 (QVSG…RRLS). Basic and acidic residues-rich tracts occupy residues 123-132 (EWRKRKEMQT) and 222-232 (LETKASSDEAR). Residues 235–249 (PSTTQPQQETTTKPT) show a composition bias toward low complexity.

It belongs to the Ninja family. Forms a heterodimer with AFP2. Interacts with ABI5/DPBF1, DPBF2, AREB3/DPBF3, ABF1, ABF3/DPBF5 and ABF4/AREB2.

The protein resides in the nucleus. Functionally, acts as a negative regulator of abscisic acid (ABA) response during germination through the ubiquitin-mediated proteolysis of ABI5/DPBF1. The sequence is that of Ninja-family protein AFP1 (AFP1) from Arabidopsis thaliana (Mouse-ear cress).